A 524-amino-acid polypeptide reads, in one-letter code: Lysophospholipid acyltransferase LPCAT4 (524 aa).

2 consecutive transmembrane segments (helical) span residues 40-62 (CLLG…FLLW) and 87-107 (TVCH…LGFL). The short motif at 129 to 134 (HSTFFD) is the HXXXXD motif element. Residue asparagine 152 is glycosylated (N-linked (GlcNAc...) asparagine). Residues 490-524 (PHKPRSTSQIPNASSPSSPTALANGTVQAPKQKGD) form a disordered region. A compositionally biased stretch (polar residues) spans 495 to 518 (STSQIPNASSPSSPTALANGTVQA).

It belongs to the 1-acyl-sn-glycerol-3-phosphate acyltransferase family. As to expression, widely expressed with much higher level in brain. Expressed in erythroleukemic cells but not in reticulocytes.

The protein localises to the endoplasmic reticulum membrane. The enzyme catalyses a 1-acyl-sn-glycero-3-phosphoethanolamine + an acyl-CoA = a 1,2-diacyl-sn-glycero-3-phosphoethanolamine + CoA. The catalysed reaction is a 1-O-(1Z-alkenyl)-sn-glycero-3-phosphoethanolamine + an acyl-CoA = a 1-O-(1Z-alkenyl)-2-acyl-sn-glycero-3-phosphoethanolamine + CoA. It catalyses the reaction a 1-acyl-sn-glycero-3-phosphocholine + an acyl-CoA = a 1,2-diacyl-sn-glycero-3-phosphocholine + CoA. It carries out the reaction a 1-O-alkyl-sn-glycero-3-phosphocholine + acetyl-CoA = a 1-O-alkyl-2-acetyl-sn-glycero-3-phosphocholine + CoA. The enzyme catalyses a 1-acyl-sn-glycero-3-phospho-L-serine + an acyl-CoA = a 1,2-diacyl-sn-glycero-3-phospho-L-serine + CoA. The catalysed reaction is octanoyl-CoA + a 1-acyl-sn-glycero-3-phosphoethanolamine = 1-acyl-2-octanoyl-sn-glycero-3-phosphoethanolamine + CoA. It catalyses the reaction a 1-acyl-sn-glycero-3-phosphoethanolamine + hexadecanoyl-CoA = 1-acyl-2-hexadecanoyl-sn-glycero-3-phosphoethanolamine + CoA. It carries out the reaction a 1-acyl-sn-glycero-3-phosphoethanolamine + octadecanoyl-CoA = 1-acyl-2-octadecanoyl-sn-glycero-3-phosphoethanolamine + CoA. The enzyme catalyses a 1-acyl-sn-glycero-3-phosphoethanolamine + (9Z)-octadecenoyl-CoA = 1-acyl-2-(9Z)-octadecenoyl-sn-glycero-3-phosphoethanolamine + CoA. The catalysed reaction is a 1-acyl-sn-glycero-3-phosphoethanolamine + (5Z,8Z,11Z,14Z)-eicosatetraenoyl-CoA = 1-acyl-2-(5Z,8Z,11Z,14Z)-eicosatetraenoyl-sn-glycero-3-phosphoethanolamine + CoA. It catalyses the reaction a 1-O-(1Z-alkenyl)-sn-glycero-3-phosphoethanolamine + octanoyl-CoA = 1-O-(1Z)-alkenyl-2-octanoyl-sn-glycero-3-phosphoethanolamine + CoA. It carries out the reaction a 1-O-(1Z-alkenyl)-sn-glycero-3-phosphoethanolamine + hexadecanoyl-CoA = 1-O-(1Z)-alkenyl-2-hexadecanoyl-sn-glycero-3-phosphoethanolamine + CoA. The enzyme catalyses a 1-O-(1Z-alkenyl)-sn-glycero-3-phosphoethanolamine + octadecanoyl-CoA = 1-O-(1Z)-alkenyl-2-octadecanoyl-sn-glycero-3-phosphoethanolamine + CoA. The catalysed reaction is a 1-O-(1Z-alkenyl)-sn-glycero-3-phosphoethanolamine + (9Z)-octadecenoyl-CoA = 1-O-(1Z)-alkenyl-2-(9Z)-octadecenoyl-sn-glycero-3-phosphoethanolamine + CoA. It catalyses the reaction a 1-O-(1Z-alkenyl)-sn-glycero-3-phosphoethanolamine + (5Z,8Z,11Z,14Z)-eicosatetraenoyl-CoA = 1-O-(1Z)-alkenyl-2-(5Z,8Z,11Z,14Z)-eicosatetraenoyl-sn-glycero-3-phosphoethanolamine + CoA. It carries out the reaction a 1-acyl-sn-glycero-3-phosphocholine + hexadecanoyl-CoA = 1-acyl-2-hexadecanoyl-sn-glycero-3-phosphocholine + CoA. The enzyme catalyses a 1-acyl-sn-glycero-3-phosphocholine + (9Z)-octadecenoyl-CoA = a 1-acyl-2-(9Z)-octadecenoyl-sn-glycero-3-phosphocholine + CoA. The catalysed reaction is 1-O-hexadecyl-sn-glycero-3-phosphocholine + (9Z)-octadecenoyl-CoA = 1-O-hexadecyl-2-(9Z)-octadecenoyl-sn-glycero-3-phosphocholine + CoA. It catalyses the reaction 1-O-hexadecyl-sn-glycero-3-phosphocholine + (5Z,8Z,11Z,14Z)-eicosatetraenoyl-CoA = 1-O-hexadecyl-2-(5Z,8Z,11Z,14Z)-eicosatetraenoyl-sn-glycero-3-phosphocholine + CoA. It carries out the reaction 1-hexadecanoyl-sn-glycero-3-phospho-L-serine + (9Z)-octadecenoyl-CoA = 1-hexadecanoyl-2-(9Z-octadecenoyl)-sn-glycero-3-phospho-L-serine + CoA. The enzyme catalyses 1-octadecanoyl-sn-glycero-3-phospho-(1'-sn-glycerol) + (9Z)-octadecenoyl-CoA = 1-octadecanoyl-2-(9Z-octadecenoyl)-sn-glycero-3-phospho-(1'-sn-glycerol) + CoA. The catalysed reaction is 1-octadecanoyl-sn-glycero-3-phospho-(1'-sn-glycerol) + (5Z,8Z,11Z,14Z)-eicosatetraenoyl-CoA = 1-octadecanoyl-2-(5Z,8Z,11Z,14Z-eicosatetraenoyl)-sn-glycero-3-phospho-(1'-sn-glycerol) + CoA. Its pathway is lipid metabolism; phospholipid metabolism. Displays acyl-CoA-dependent lysophospholipid acyltransferase activity with a subset of lysophospholipids as substrates; converts lysophosphatidylethanolamine to phosphatidylethanolamine, 1-alkenyl-lysophatidylethanolamine to 1-alkenyl-phosphatidylethanolamine, lysophosphatidylglycerol and alkyl-lysophosphatidylcholine to phosphatidylglycerol and alkyl-phosphatidylcholine, respectively. In contrast, has no lysophosphatidylinositol, glycerol-3-phosphate, diacylglycerol or lysophosphatidic acid acyltransferase activity. Prefers long chain acyl-CoAs (C16, C18) as acyl donors. Converts lysophosphatidylcholine to phosphatidycholine. The polypeptide is Lysophospholipid acyltransferase LPCAT4 (Lpcat4) (Mus musculus (Mouse)).